We begin with the raw amino-acid sequence, 477 residues long: S-triazine hydrolase (477 aa).

2 stretches are compositionally biased toward low complexity: residues 38 to 73 and 120 to 132; these read SPTT…KSSS and PLSS…DPTT. Disordered regions lie at residues 38-77 and 120-143; these read SPTT…GVVH and PLSS…GSPF.

This sequence belongs to the metallo-dependent hydrolases superfamily. ATZ/TRZ family.

The protein operates within xenobiotic degradation; melamine degradation. Functionally, hydrolytic deamination of the S-triazine substrate melamine. This chain is S-triazine hydrolase (trzA), found in Gordonia rubripertincta (Rhodococcus corallinus).